The primary structure comprises 174 residues: Small ribosomal subunit protein uS4 (174 aa).

Residues arginine 105–glutamate 169 enclose the S4 RNA-binding domain.

It belongs to the universal ribosomal protein uS4 family. In terms of assembly, part of the 30S ribosomal subunit. Contacts protein S5. The interaction surface between S4 and S5 is involved in control of translational fidelity.

One of the primary rRNA binding proteins, it binds directly to 16S rRNA where it nucleates assembly of the body of the 30S subunit. Its function is as follows. With S5 and S12 plays an important role in translational accuracy. The chain is Small ribosomal subunit protein uS4 from Natronomonas pharaonis (strain ATCC 35678 / DSM 2160 / CIP 103997 / JCM 8858 / NBRC 14720 / NCIMB 2260 / Gabara) (Halobacterium pharaonis).